A 296-amino-acid chain; its full sequence is MFKSGFVTIVGRPNVGKSTLLNAIMKEKLSIVSCRPQTTRNNIQTILTEDNYQLVFVDTPGIHKPKHKLGEYMVKSASEAMKDVDLVLFLINPDEKPGRGDLFIIEQLKEVKVPVFLVLNKIDENPQEKVAETLKTYSELMEFEEIIPISALKGKNIDLLKELMFKYIPEGPQYYPEDMIIDQNERFIVAEIVREKALRLLSEEVPHGIAVEILQMKKNEKGTYHIEGNILCEKNSHKPIIIGKGGSKLKKISQYARQDIEAFLQSKVYIRLWVKVKEEWRDNQSLLKELGYKNMK.

The 168-residue stretch at lysine 3–glutamate 170 folds into the Era-type G domain. The segment at glycine 11–serine 18 is G1. A GTP-binding site is contributed by glycine 11–serine 18. The G2 stretch occupies residues glutamine 37–asparagine 41. Positions aspartate 58–glycine 61 are G3. Residues aspartate 58–isoleucine 62 and asparagine 120–aspartate 123 each bind GTP. The interval asparagine 120–aspartate 123 is G4. The tract at residues isoleucine 149–alanine 151 is G5. The KH type-2 domain maps to leucine 201 to glutamate 278.

This sequence belongs to the TRAFAC class TrmE-Era-EngA-EngB-Septin-like GTPase superfamily. Era GTPase family. In terms of assembly, monomer.

Its subcellular location is the cytoplasm. The protein localises to the cell membrane. Functionally, an essential GTPase that binds both GDP and GTP, with rapid nucleotide exchange. Plays a role in 16S rRNA processing and 30S ribosomal subunit biogenesis and possibly also in cell cycle regulation and energy metabolism. The protein is GTPase Era of Clostridium botulinum (strain ATCC 19397 / Type A).